The following is a 1124-amino-acid chain: EGF and laminin G domain-containing protein (1124 aa).

The Extracellular segment spans residues 1–1055; it reads RTFVKKYSAS…KLQAEDDDKT (1055 aa). Laminin G-like domains lie at 8–203 and 210–369; these read SASR…NQKC and PFTF…WSGC. Cystine bridges form between C167–C203, C342–C369, C375–C386, C380–C395, C397–C412, C761–C788, C792–C803, C797–C812, and C814–C824. In terms of domain architecture, EGF-like 1 spans 371 to 413; it reads ITDFCIFSPCLHGGECTQTGKTFSCGCSGTGYDKGPNSLSVCQ. Residues 621-788 enclose the Laminin G-like 3 domain; the sequence is NTATFVNEDG…GEAVFVKSGC (168 aa). The EGF-like 2 domain occupies 789–825; it reads GAACENNSCKNHAKCLDNYNVYFCDCSKTPYYGYFCH. The tract at residues 1011 to 1047 is disordered; the sequence is RATCGPEPKVPEIPTPRPVGQRADVSTPQGITTNPKL. A compositionally biased stretch (polar residues) spans 1034–1046; it reads DVSTPQGITTNPK. The chain crosses the membrane as a helical span at residues 1056–1076; it reads AIIVVVVLILVLLLVVLILVI. The Cytoplasmic segment spans residues 1077 to 1124; the sequence is YWYWARHKGEYHTHEDDEELKATDPYIEPAAPRKLKGEEPEKKKEWYI. The segment at 1090 to 1124 is disordered; sequence HEDDEELKATDPYIEPAAPRKLKGEEPEKKKEWYI. Positions 1111–1124 are enriched in basic and acidic residues; it reads LKGEEPEKKKEWYI.

Component of the acid-insoluble organic matrix of the aragonitic skeleton (at protein level).

The protein resides in the membrane. This is EGF and laminin G domain-containing protein from Acropora millepora (Staghorn coral).